Here is a 593-residue protein sequence, read N- to C-terminus: A-type ATP synthase subunit A (593 aa).

236–243 serves as a coordination point for ATP; the sequence is GPFGSGKT.

The protein belongs to the ATPase alpha/beta chains family. Has multiple subunits with at least A(3), B(3), C, D, E, F, H, I and proteolipid K(x).

The protein resides in the cell membrane. The catalysed reaction is ATP + H2O + 4 H(+)(in) = ADP + phosphate + 5 H(+)(out). Functionally, component of the A-type ATP synthase that produces ATP from ADP in the presence of a proton gradient across the membrane. The A chain is the catalytic subunit. The polypeptide is A-type ATP synthase subunit A (Pyrobaculum islandicum (strain DSM 4184 / JCM 9189 / GEO3)).